A 232-amino-acid polypeptide reads, in one-letter code: Urease accessory protein UreF (232 aa).

This sequence belongs to the UreF family. UreD, UreF and UreG form a complex that acts as a GTP-hydrolysis-dependent molecular chaperone, activating the urease apoprotein by helping to assemble the nickel containing metallocenter of UreC. The UreE protein probably delivers the nickel.

The protein resides in the cytoplasm. Its function is as follows. Required for maturation of urease via the functional incorporation of the urease nickel metallocenter. In Trichodesmium erythraeum (strain IMS101), this protein is Urease accessory protein UreF.